The sequence spans 263 residues: H-2 class II histocompatibility antigen, A-S beta chain (263 aa).

Residues 1 to 27 (MALQIPSLLLSAAVVVLMVLSSPGTEG) form the signal peptide. The interval 28–120 (GDSERHFVFQ…VETHTSLRRL (93 aa)) is beta-1. Residues 28–224 (GDSERHFVFQ…RAQSESARSK (197 aa)) are Extracellular-facing. 2 disulfide bridges follow: cysteine 42/cysteine 104 and cysteine 143/cysteine 199. Asparagine 46 is a glycosylation site (N-linked (GlcNAc...) asparagine). Residues 121–214 (EQPNVVISLS…SLKSPITVEW (94 aa)) are beta-2. Residues 123 to 211 (PNVVISLSRT…EHPSLKSPIT (89 aa)) enclose the Ig-like C1-type domain. The interval 215–224 (RAQSESARSK) is connecting peptide. A helical transmembrane segment spans residues 225–245 (MLSGIGGCVLGVIFLGLGLFI). The Cytoplasmic segment spans residues 246-263 (RHRSQKGPRGPPPAGLLQ).

Belongs to the MHC class II family. Post-translationally, ubiquitinated in immature dendritic cells leading to down-regulation of MHC class II.

Its subcellular location is the membrane. This is H-2 class II histocompatibility antigen, A-S beta chain (H2-Ab1) from Mus musculus (Mouse).